Here is a 242-residue protein sequence, read N- to C-terminus: Large ribosomal subunit protein uL1 (242 aa).

It belongs to the universal ribosomal protein uL1 family. Part of the 50S ribosomal subunit.

Its function is as follows. Binds directly to 23S rRNA. The L1 stalk is quite mobile in the ribosome, and is involved in E site tRNA release. Functionally, protein L1 is also a translational repressor protein, it controls the translation of the L11 operon by binding to its mRNA. This is Large ribosomal subunit protein uL1 from Wigglesworthia glossinidia brevipalpis.